The following is a 480-amino-acid chain: Ftsk domain-containing protein YdcQ (480 aa).

2 helical membrane-spanning segments follow: residues 25 to 45 (VKLAGAIIFVPVFLLSMFLFW) and 71 to 91 (SVLCSVLIAVGSIVASYFLLF). Residues 217-399 (MKHISWQFDK…LGLMSDTGYG (183 aa)) form the FtsK domain. 234–241 (GGTGGGKT) lines the ATP pocket.

It localises to the cell membrane. The chain is Ftsk domain-containing protein YdcQ (ydcQ) from Bacillus subtilis (strain 168).